The sequence spans 354 residues: Trans-L-3-hydroxyproline dehydratase (354 aa).

The active-site Proton acceptor is the Cys-104. Substrate-binding positions include 105–106, Asp-269, and 274–275; these read GH and GS.

This sequence belongs to the proline racemase family. Homodimer.

The enzyme catalyses trans-3-hydroxy-L-proline = 1-pyrroline-2-carboxylate + H2O. Its function is as follows. Catalyzes the dehydration of trans-3-hydroxy-L-proline to Delta(1)-pyrroline-2-carboxylate (Pyr2C). This chain is Trans-L-3-hydroxyproline dehydratase (L3HYPDH), found in Bos taurus (Bovine).